Reading from the N-terminus, the 30-residue chain is Neurotoxin II.22.5 (30 aa).

In terms of domain architecture, LCN-type CS-alpha/beta spans 1–30; sequence KEGYIVNYHTGCKYTCAKLGDNDYCLRECK.

It belongs to the long (4 C-C) scorpion toxin superfamily. Sodium channel inhibitor family. Beta subfamily. As to expression, expressed by the venom gland.

The protein localises to the secreted. Binds to sodium channels (Nav) and inhibits the inactivation of the activated channels, thereby blocking neuronal transmission. In Centruroides tecomanus (Scorpion), this protein is Neurotoxin II.22.5.